A 61-amino-acid polypeptide reads, in one-letter code: Potassium channel toxin alpha-KTx 6.9 (61 aa).

Residues 1–23 (MNAKFILLLLVVTTTTLLPDAKG) form the signal peptide. Disulfide bonds link Cys29-Cys50, Cys35-Cys55, Cys39-Cys57, and Cys45-Cys60.

Belongs to the short scorpion toxin superfamily. Potassium channel inhibitor family. Alpha-KTx 06 subfamily. Expressed by the venom gland.

The protein localises to the secreted. Its function is as follows. Inhibits Kv1.2/KCNA2 and Kv1.3/KCNA3 voltage-gated potassium channels. The protein is Potassium channel toxin alpha-KTx 6.9 of Opistophthalmus carinatus (African yellow leg scorpion).